We begin with the raw amino-acid sequence, 270 residues long: Undecaprenyl-diphosphatase 1 (270 aa).

Helical transmembrane passes span 41 to 61 (IEGFSFELLMNAGSLIAVLLV), 88 to 108 (FRFIIYLIIATIPAGVIGVLF), 117 to 137 (KDGVRITAVTLLITGLALFLI), 192 to 212 (FSFLLYIPVSLGGTILSITDI), 218 to 238 (LGELFLPYLFAFIASVIATYF), and 250 to 270 (GNLVYFSIYCFVIGIAVLIFA).

It belongs to the UppP family.

The protein localises to the cell membrane. The catalysed reaction is di-trans,octa-cis-undecaprenyl diphosphate + H2O = di-trans,octa-cis-undecaprenyl phosphate + phosphate + H(+). Catalyzes the dephosphorylation of undecaprenyl diphosphate (UPP). Confers resistance to bacitracin. The chain is Undecaprenyl-diphosphatase 1 from Bacillus licheniformis (strain ATCC 14580 / DSM 13 / JCM 2505 / CCUG 7422 / NBRC 12200 / NCIMB 9375 / NCTC 10341 / NRRL NRS-1264 / Gibson 46).